Here is a 365-residue protein sequence, read N- to C-terminus: Zinc transporter 7 (365 aa).

A signal peptide spans 1–26; it reads MAYSKACYKLTTITILLLSFTLPSLA. Residues 27–56 are Extracellular-facing; it reads GNAENADVSECKAESGDLSCHNNKEAQKLK. Residues 57–77 form a helical membrane-spanning segment; it reads IIAIPSILVASMIGVSLPLFS. Topologically, residues 78-90 are cytoplasmic; that stretch reads RSIPALGPDREMS. A helical transmembrane segment spans residues 91 to 111; the sequence is VIVKTLASGVILATGFMHVLP. The Extracellular segment spans residues 112–129; the sequence is DSFDDLTSKCLPEDPWQK. A helical membrane pass occupies residues 130–150; it reads FPFATFITMISALLVLMIESF. Residues 151-210 lie on the Cytoplasmic side of the membrane; that stretch reads AMCAYARRTSKREGEVVPLENGSNSVDTQNDIQTLENGSSYVEKQEKVNEDKTSELLRNK. The chain crosses the membrane as a helical span at residues 211–231; it reads VIAQILELGIVVHSVVIGLAM. Residues 232-242 are Extracellular-facing; sequence GASDNKCTVQS. The helical transmembrane segment at 243-263 threads the bilayer; it reads LIAALCFHQLFEGMGLGGSIL. Residues 264-272 lie on the Cytoplasmic side of the membrane; it reads QAQFKSKTN. Residues 273–293 traverse the membrane as a helical segment; sequence WTMVFFFSVTTPFGIVLGMAI. Residues 294–304 are Extracellular-facing; the sequence is QKIYDETSPTA. A helical membrane pass occupies residues 305-325; that stretch reads LIVVGVLNACSAGLLIYMALV. Over 326–344 the chain is Cytoplasmic; that stretch reads NLLAHEFFGPKIQGNIKLH. Residues 345-365 form a helical membrane-spanning segment; that stretch reads VLGYVATFTGAAGMSLMAKWA.

This sequence belongs to the ZIP transporter (TC 2.A.5) family.

It localises to the cell membrane. In terms of biological role, probably mediates zinc uptake from the rhizosphere. This is Zinc transporter 7 (ZIP7) from Arabidopsis thaliana (Mouse-ear cress).